The primary structure comprises 220 residues: Peritrophin-55 (220 aa).

The first 19 residues, methionine 1 to alanine 19, serve as a signal peptide directing secretion. Asparagine 29 carries an N-linked (GlcNAc...) asparagine glycan. The Chitin-binding type-2 domain maps to isoleucine 33–tyrosine 95. Cysteine 68 and cysteine 84 are joined by a disulfide. The span at threonine 116 to asparagine 165 shows a compositional bias: low complexity. Positions threonine 116–asparagine 220 are disordered. Residues proline 197–glycine 210 are compositionally biased toward pro residues.

Post-translationally, glycosylated. Larval peritrophic membrane.

In terms of biological role, may bind oligosaccharide structures. The protein is Peritrophin-55 of Lucilia cuprina (Green bottle fly).